The following is a 153-amino-acid chain: Putative nuclear shuttle protein (153 aa).

Belongs to the nanoviridae nuclear shuttle protein family.

The protein resides in the host nucleus. Its subcellular location is the host cytoplasm. In terms of biological role, putative nuclear shuttle protein. The chain is Putative nuclear shuttle protein (DNA-N) from Trifolium subterraneum (Subterranean clover).